A 740-amino-acid polypeptide reads, in one-letter code: MLKLFSAFRKNKIWDFNGGIHPPEMKTQTNGTPLRQVLLAQHFVIPLKQHIGAEGELCVSVGDKVLRGQPLTRGRGKMLPVHAPTSGTVTAIAPHSTAHPSALAELSVIIDADGEDCWIPRDGWVDYRSRSREELIERIHQFGVAGLGGAGFPTGVKLQGGGDKIETLIINAAECEPYITADDRLMQDCAAQVVEGIRILAHILQPREILIGIEDNKPQAISMLRAVLADSNDISLRVIPTKYPSGGAKQLTYILTGKQVPHGGRSSDIGVLMQNVGTAYAVKRAVIDGEPITERVVTLTGEAIARPGNVWARLGTPVRHLLNDAGFCPSADQMVIMGGPLMGFTLPWLDVPVVKITNCLLAPSANELGEPQEEQSCIRCSACADACPVDLLPQQLYWFSKGQQHDKATTHNIADCIECGACAWVCPSNIPLVQYFRQEKAEIAAIRQEEKRAAEAKARFEARQARLEREKATRLERHKSAAVQPAAKDKDAIAAALARVKEKQAQATQPIVIKAGERPDNSAIIAEREARKAQARAKQAELEQTNDAATVAEPRKTAVEAAIARSKARKLEQQQANAEPEEQVDPRKAAVEAAIARAKARKLEQQQANAEPEEQVDPRKAAVEAAIARAKARKLEQQQANAEPEEQVDPRKAAVEAAIARAKARKLEQQQANAEPEEQVDPRKAAVEAAIARAKARKLEQQQANAEPEEQVDPRKAAVAAAIARVQAKKAAQQKVVNED.

2 consecutive 4Fe-4S ferredoxin-type domains span residues 369 to 397 (GEPQEEQSCIRCSACADACPVDLLPQQLY) and 407 to 436 (KATTHNIADCIECGACAWVCPSNIPLVQYF). 8 residues coordinate [4Fe-4S] cluster: Cys377, Cys380, Cys383, Cys387, Cys416, Cys419, Cys422, and Cys426. The disordered stretch occupies residues 598–716 (AKARKLEQQQ…EPEEQVDPRK (119 aa)).

This sequence belongs to the 4Fe4S bacterial-type ferredoxin family. RnfC subfamily. In terms of assembly, the complex is composed of six subunits: RsxA, RsxB, RsxC, RsxD, RsxE and RsxG. It depends on [4Fe-4S] cluster as a cofactor.

It is found in the cell inner membrane. Its function is as follows. Part of a membrane-bound complex that couples electron transfer with translocation of ions across the membrane. Required to maintain the reduced state of SoxR. The protein is Ion-translocating oxidoreductase complex subunit C of Shigella flexneri serotype 5b (strain 8401).